Reading from the N-terminus, the 281-residue chain is Transcription factor bHLH79 (281 aa).

The tract at residues 47-167 (FTRSEHSGNK…GQATDRHSLA (121 aa)) is disordered. 2 stretches are compositionally biased toward basic and acidic residues: residues 77–88 (KTRDLNSEDDSS) and 138–152 (TEQK…DYIH). Residues 159-209 (QATDRHSLAERARREKISEKMTALQDIIPGCNKIIGKALVLDEIINYIQSL) form the bHLH domain.

In terms of assembly, homodimer.

The protein resides in the nucleus. The protein is Transcription factor bHLH79 (BHLH79) of Arabidopsis thaliana (Mouse-ear cress).